Consider the following 379-residue polypeptide: Fructose-1,6-bisphosphate aldolase/phosphatase (379 aa).

Asp13 (proton acceptor; for FBP phosphatase activity) is an active-site residue. Residues Asp13, His20, Asp51, and Asp52 each coordinate Mg(2+). His20 lines the beta-D-fructose 1,6-bisphosphate pocket. Residue His20 participates in dihydroxyacetone phosphate binding. Beta-D-fructose 1,6-bisphosphate is bound at residue Tyr89. Residue Gln93 participates in Mg(2+) binding. Beta-D-fructose 1,6-bisphosphate is bound at residue 102-103 (GN). Asp130 contributes to the Mg(2+) binding site. Position 131 (Lys131) interacts with beta-D-fructose 1,6-bisphosphate. Lys131 serves as a coordination point for dihydroxyacetone phosphate. The Proton donor/acceptor; for FBP aldolase activity role is filled by Tyr227. 3 residues coordinate Mg(2+): Lys230, Asp231, and Asp232. The active-site Schiff-base intermediate with DHAP; for FBP aldolase activity is Lys230. Beta-D-fructose 1,6-bisphosphate is bound by residues 240–241 (QS), Arg264, Asp285, and Tyr346. Arg264 and Asp285 together coordinate dihydroxyacetone phosphate.

This sequence belongs to the FBP aldolase/phosphatase family. Homooctamer; dimer of tetramers. The cofactor is Mg(2+).

It catalyses the reaction beta-D-fructose 1,6-bisphosphate + H2O = beta-D-fructose 6-phosphate + phosphate. The catalysed reaction is beta-D-fructose 1,6-bisphosphate = D-glyceraldehyde 3-phosphate + dihydroxyacetone phosphate. The protein operates within carbohydrate biosynthesis; gluconeogenesis. Functionally, catalyzes two subsequent steps in gluconeogenesis: the aldol condensation of dihydroxyacetone phosphate (DHAP) and glyceraldehyde-3-phosphate (GA3P) to fructose-1,6-bisphosphate (FBP), and the dephosphorylation of FBP to fructose-6-phosphate (F6P). The polypeptide is Fructose-1,6-bisphosphate aldolase/phosphatase (Moorella thermoacetica (strain ATCC 39073 / JCM 9320)).